The sequence spans 447 residues: Oxysterols receptor LXR-alpha (447 aa).

Disordered regions lie at residues 1 to 37 (MSLW…GGSS) and 65 to 88 (ALLT…KKGP). The interval 1–96 (MSLWLGAPVP…GPAPKMLGNE (96 aa)) is transactivation AF-1; required for ligand-independent transactivation function. Residues 24-37 (GAQDASSQAQGGSS) are compositionally biased toward low complexity. The nuclear receptor DNA-binding region spans 95–170 (NELCSVCGDK…AGMREECVLS (76 aa)). 2 NR C4-type zinc fingers span residues 98-118 (CSVC…CEGC) and 134-158 (CHSG…LRKC). Residues 180–202 (KRQEEEQAHATSLPPRASSPPQI) form a disordered region. The tract at residues 205-447 (QLSPEQLGMI…LLSEIWDVHE (243 aa)) is transactivation AF-2; required for ligand-dependent transactivation function; mediates interaction with CCAR2. In terms of domain architecture, NR LBD spans 209–447 (EQLGMIEKLV…LLSEIWDVHE (239 aa)).

This sequence belongs to the nuclear hormone receptor family. NR1 subfamily. As to quaternary structure, heterodimer of NR1H3 and RXR (retinoic acid receptor). Interacts with CCAR2 (via N-terminus) in a ligand-independent manner. Interacts with SIRT1 and this interaction is inhibited by CCAR2. Interacts with GPS2. In terms of processing, ubiquitinated by UBR5, leading to its degradation: UBR5 specifically recognizes and binds ligand-bound NR1H3 when it is not associated with coactivators (NCOAs). In presence of NCOAs, the UBR5-degron is not accessible, preventing its ubiquitination and degradation. Visceral organs specific expression. Strong expression was found in liver, kidney and intestine followed by spleen and to a lesser extent the adrenals.

It localises to the nucleus. The protein localises to the cytoplasm. In terms of biological role, nuclear receptor that exhibits a ligand-dependent transcriptional activation activity. Interaction with retinoic acid receptor (RXR) shifts RXR from its role as a silent DNA-binding partner to an active ligand-binding subunit in mediating retinoid responses through target genes defined by LXRES. LXRES are DR4-type response elements characterized by direct repeats of two similar hexanuclotide half-sites spaced by four nucleotides. Plays an important role in the regulation of cholesterol homeostasis, regulating cholesterol uptake through MYLIP-dependent ubiquitination of LDLR, VLDLR and LRP8. Interplays functionally with RORA for the regulation of genes involved in liver metabolism. Induces LPCAT3-dependent phospholipid remodeling in endoplasmic reticulum (ER) membranes of hepatocytes, driving SREBF1 processing and lipogenesis. Via LPCAT3, triggers the incorporation of arachidonate into phosphatidylcholines of ER membranes, increasing membrane dynamics and enabling triacylglycerols transfer to nascent very low-density lipoprotein (VLDL) particles. Via LPCAT3 also counteracts lipid-induced ER stress response and inflammation, likely by modulating SRC kinase membrane compartmentalization and limiting the synthesis of lipid inflammatory mediators. This Homo sapiens (Human) protein is Oxysterols receptor LXR-alpha (NR1H3).